A 279-amino-acid chain; its full sequence is Tryptophan prenyltransferase ComQ (279 aa).

Mg(2+) is bound by residues Asp-67 and Asp-71.

The protein belongs to the FPP/GGPP synthase family. It depends on Mg(2+) as a cofactor.

Its subcellular location is the cell membrane. It catalyses the reaction L-tryptophyl-[protein] + (2E)-geranyl diphosphate = (2S,3R)-3-geranyl-2,3-dihydro-2,N(alpha)-cyclo-L-tryptophyl-[protein] + diphosphate. Its function is as follows. Part of a major quorum-sensing system that regulates the development of genetic competence. Involved in the maturation of the competence pheromone ComX. Acts by catalyzing the transfer of a geranyl group on the ComX pheromone. Cannot use farnesyl diphosphate (FPP). The polypeptide is Tryptophan prenyltransferase ComQ (Bacillus spizizenii (Bacillus subtilis subsp. spizizenii)).